Here is a 516-residue protein sequence, read N- to C-terminus: Threonine synthase 2, chloroplastic (516 aa).

A chloroplast-targeting transit peptide spans 1-33 (MASFSLPHSATYFPSHSETSLKPHSAASFTVRC). Over residues 1–37 (MASFSLPHSATYFPSHSETSLKPHSAASFTVRCTSAS) the composition is skewed to polar residues. The disordered stretch occupies residues 1 to 55 (MASFSLPHSATYFPSHSETSLKPHSAASFTVRCTSASPAVPPQTPQKPRRSPDEN). S-adenosyl-L-methionine is bound by residues 133–135 (PYG), 156–158 (SAF), asparagine 163, leucine 164, lysine 172, and asparagine 178. Lysine 194 is modified (N6-(pyridoxal phosphate)lysine). Residues 326–330 (GNLGN) and threonine 464 contribute to the pyridoxal 5'-phosphate site.

Belongs to the threonine synthase family. Homodimer. Requires pyridoxal 5'-phosphate as cofactor.

Its subcellular location is the plastid. It localises to the chloroplast. The catalysed reaction is O-phospho-L-homoserine + H2O = L-threonine + phosphate. It participates in amino-acid biosynthesis; L-threonine biosynthesis; L-threonine from L-aspartate: step 5/5. Its activity is regulated as follows. Allosterically activated by S-adenosyl-methionine (SAM). Its function is as follows. Catalyzes the gamma-elimination of phosphate from L-phosphohomoserine and the beta-addition of water to produce L-threonine. This chain is Threonine synthase 2, chloroplastic (TS2), found in Arabidopsis thaliana (Mouse-ear cress).